The primary structure comprises 260 residues: MAVISMKQLLEAGVHFGHQTRRWNPKMAKYIFTERNGIHVIDLQQTVKYADQAYDFMRDAAANDAVILFVGTKKQAADAVKEEAERSGQYFINHRWLGGTLTNWSTIQKRVARLKEIKRMEEDGTFEVLPKKEVALLNKQRARLEKFLGGIEDMPRIPDVMYVVDPHKEQIAVKEAKKLGIPVVAMVDTNTDPDDIDVIIPANDDAIRAVKLITAKMADAVIEGRQGEDSVESVEAELAATETQADSIEEIVEVVEGSNE.

The protein belongs to the universal ribosomal protein uS2 family.

The protein is Small ribosomal subunit protein uS2 of Streptococcus sanguinis (strain SK36).